We begin with the raw amino-acid sequence, 72 residues long: Protein SlyX (72 aa).

This sequence belongs to the SlyX family.

The protein is Protein SlyX of Cronobacter sakazakii (strain ATCC BAA-894) (Enterobacter sakazakii).